Consider the following 466-residue polypeptide: Eukaryotic translation initiation factor 3 subunit M (466 aa).

The interval 40-62 (EISPLLEPLRQQEQSDAEPDRKQ) is disordered. A PCI domain is found at 211–378 (AQTHILQALQ…SEFLVHRATY (168 aa)). A disordered region spans residues 424 to 466 (AAEEAAQGKSNDKGNKSGDRRQRHGNNQQSQQQQQPQEVAAAE). A compositionally biased stretch (basic and acidic residues) spans 433–443 (SNDKGNKSGDR). Over residues 451–460 (QQSQQQQQPQ) the composition is skewed to low complexity.

Belongs to the eIF-3 subunit M family. In terms of assembly, component of the eukaryotic translation initiation factor 3 (eIF-3) complex.

Its subcellular location is the cytoplasm. Its function is as follows. Component of the eukaryotic translation initiation factor 3 (eIF-3) complex, which is involved in protein synthesis of a specialized repertoire of mRNAs and, together with other initiation factors, stimulates binding of mRNA and methionyl-tRNAi to the 40S ribosome. The eIF-3 complex specifically targets and initiates translation of a subset of mRNAs involved in cell proliferation. This is Eukaryotic translation initiation factor 3 subunit M from Aspergillus oryzae (strain ATCC 42149 / RIB 40) (Yellow koji mold).